The primary structure comprises 236 residues: Purine nucleoside phosphorylase DeoD-type (236 aa).

H5 lines the a purine D-ribonucleoside pocket. Residues G21, R25, R44, and 88 to 91 (RVGT) each bind phosphate. A purine D-ribonucleoside contacts are provided by residues 180-182 (EME) and 204-205 (SD). Residue D205 is the Proton donor of the active site.

The protein belongs to the PNP/UDP phosphorylase family. As to quaternary structure, homohexamer; trimer of homodimers.

It catalyses the reaction a purine D-ribonucleoside + phosphate = a purine nucleobase + alpha-D-ribose 1-phosphate. The catalysed reaction is a purine 2'-deoxy-D-ribonucleoside + phosphate = a purine nucleobase + 2-deoxy-alpha-D-ribose 1-phosphate. In terms of biological role, catalyzes the reversible phosphorolytic breakdown of the N-glycosidic bond in the beta-(deoxy)ribonucleoside molecules, with the formation of the corresponding free purine bases and pentose-1-phosphate. This chain is Purine nucleoside phosphorylase DeoD-type, found in Shewanella frigidimarina (strain NCIMB 400).